We begin with the raw amino-acid sequence, 174 residues long: Small ribosomal subunit protein uS5 (174 aa).

In terms of domain architecture, S5 DRBM spans 18–81; that stretch reads WQERVIQIRR…ADGKKHLIDI (64 aa).

The protein belongs to the universal ribosomal protein uS5 family. Part of the 30S ribosomal subunit. Contacts proteins S4 and S8.

Functionally, with S4 and S12 plays an important role in translational accuracy. Its function is as follows. Located at the back of the 30S subunit body where it stabilizes the conformation of the head with respect to the body. The polypeptide is Small ribosomal subunit protein uS5 (Trichormus variabilis (strain ATCC 29413 / PCC 7937) (Anabaena variabilis)).